Here is a 563-residue protein sequence, read N- to C-terminus: Coiled-coil domain-containing protein 38 (563 aa).

The stretch at 128-211 (TKKKTIKRFE…SIKSDIAKTE (84 aa)) forms a coiled coil. A disordered region spans residues 265-310 (DNSIDSDKMSVSEEWSSRRGSQGGRHGKHTLGQDSRKSSGFTRPES). Residues 269 to 281 (DSDKMSVSEEWSS) show a composition bias toward basic and acidic residues. Coiled-coil stretches lie at residues 361–415 (QDVD…RSRL) and 454–522 (NAVQ…AVAQ). Residues 543–563 (QELLLVSDTRSKSQDEEYFFS) form a disordered region.

Interacts with CCDC42, CFAP53, IFT88 and ODF2. Interacts with CCDC146. Interacts with TEKT3. Interacts with ubiquitinated histone H2A. In terms of tissue distribution, expressed exclusively in testis where it is detected mainly in spermatogonia and spermatocytes (at protein level).

It is found in the cytoplasm. It localises to the cytoskeleton. The protein localises to the microtubule organizing center. The protein resides in the centrosome. Its subcellular location is the perinuclear region. It is found in the cell projection. It localises to the cilium. The protein localises to the flagellum. Essential for male fertility. Required for sperm flagellum biogenesis. Also required for acrosome biogenesis. Required for the attachment of developing acrosomes to the nucleus during spermiogenesis and may be involved in the transport of fibrous sheath components. The protein is Coiled-coil domain-containing protein 38 (Ccdc38) of Mus musculus (Mouse).